An 871-amino-acid polypeptide reads, in one-letter code: MDSRYNPAAIEEKRQKTWLELGLDKTPSASNKPKFYALSMFPYPSGSLHMGHVRNYTITDVIARFKRMQGYRVIHPMGWDAFGLPAENAAIDRGVPPAKWTYQNITQMRQQLQRLGLSIDWECELATCSPDYYKWTQWIFLQFLQAGLAYQKEAAVNWDPIDQTVLANEQVDNEGRSWRSGAIVERKLLRQWFFKITDYAEELLNDLDKLTGWPERVKLMQANWIGKSTGAYLEFPIVGIDEKIAVYTTRPDTVYGVSYLVLAPEHPLTNRVTTKEQQAAVEVFIKEVSNQSELERTSEDKPKRGIPTGGVAINPFTGEEVPIWIADYVLYEYGTGAVMGVPAHDVRDFKFAKNYDLPINFVIASPDDVAGFDLTPTSEIDGITQLVEVDYKQAYTEPGILINSGAFTGISSTDAKQAIIEYAEKQDFGKVRVQYRLRDWLISRQRYWGAPIPVIHCPNCGIVPVPDKDLPVQLPEEVEFTGRCGSPLTQLESWVNVPCPTCGTPAKRETDTMDTFIDSSWYFLRFPDAKNEQQVFDSSKVNDWMPVNQYVGGIEHAILHLLYSRFFTKVLRDRGLLNFDEPFQRLLTQGMVQGLTYLNPNKGGKDKWIPSNLVNSADPRDPQTDEPLQRLYATMSKSKGNGVAPEDVISKYGIDTARMFILFKAPPEKDLEWDEADVEGQFRFLNRVWRLVTDYITAGVSRKKAQSDLTKAEKELRRAIHTAIQAVTEDVEDEYQFNTAISELMKLSNALSDADKNSPIYAEGIRTLVILIAPFAPHIADELWHLLGESDSIHTQTWPSFDPAALVADEITLVIQVMGKTRGAIQVPAQADKAALEKYARESEIAQRYIEGKEIKKVIVVPGKLVNFVVS.

A 'HIGH' region motif is present at residues 42 to 52 (PYPSGSLHMGH). The 'KMSKS' region motif lies at 634–638 (TMSKS). Position 637 (lysine 637) interacts with ATP.

It belongs to the class-I aminoacyl-tRNA synthetase family.

It is found in the cytoplasm. It carries out the reaction tRNA(Leu) + L-leucine + ATP = L-leucyl-tRNA(Leu) + AMP + diphosphate. The protein is Leucine--tRNA ligase of Nostoc punctiforme (strain ATCC 29133 / PCC 73102).